The sequence spans 69 residues: uncharacterized protein (69 aa).

Residues 48–69 form a disordered region; sequence EADDVKPRKGRKPKAVSDADKD.

This is an uncharacterized protein from Salmonella phage P22 (Bacteriophage P22).